We begin with the raw amino-acid sequence, 233 residues long: Eosinophil granule major basic protein 1 (233 aa).

Positions 1–15 are cleaved as a signal peptide; the sequence is MKLLLLLALLLGAVS. A propeptide spans 16–114 (acidic); the sequence is TRHLKVDTSS…VKFFSRPGYK (99 aa). A disordered region spans residues 24–96; the sequence is SSLQSLRGEE…SELDVSPEDI (73 aa). The span at 42–57 shows a compositional bias: low complexity; sequence AEGATREATAGALMPL. The span at 58–93 shows a compositional bias: acidic residues; that stretch reads PEEEEMEGASGSEDDPEEEEEEEEEVEFSSELDVSP. The C-type lectin domain occupies 132–233; sequence WVCQRCYRGN…GKRRPFVCTY (102 aa). Disulfide bonds link Cys-134-Cys-231 and Cys-208-Cys-223.

In terms of processing, nitrated.

Its subcellular location is the cytoplasmic granule. MBP may play some important roles in the allergic reactions and inflammations, since MBP is capable of releasing histamine from mast cells and damaging the epithelial cells of bronchial tubes. Antiparasitic and antibiotic. The chain is Eosinophil granule major basic protein 1 (MBP1) from Cavia porcellus (Guinea pig).